The chain runs to 204 residues: Tat proofreading chaperone DmsD (204 aa).

This sequence belongs to the TorD/DmsD family. DmsD subfamily. In terms of assembly, monomer in solution.

Functionally, required for biogenesis/assembly of DMSO reductase, but not for the interaction of the DmsA signal peptide with the Tat system. May be part of a chaperone cascade complex that facilitates a folding-maturation pathway for the substrate protein. This Salmonella typhimurium (strain LT2 / SGSC1412 / ATCC 700720) protein is Tat proofreading chaperone DmsD.